Here is a 357-residue protein sequence, read N- to C-terminus: Uroporphyrinogen decarboxylase (357 aa).

Substrate-binding positions include 27-31 (RQAGR), Asp-77, Tyr-154, Ser-209, and His-330.

The protein belongs to the uroporphyrinogen decarboxylase family. Homodimer.

It is found in the cytoplasm. The catalysed reaction is uroporphyrinogen III + 4 H(+) = coproporphyrinogen III + 4 CO2. The protein operates within porphyrin-containing compound metabolism; protoporphyrin-IX biosynthesis; coproporphyrinogen-III from 5-aminolevulinate: step 4/4. Functionally, catalyzes the decarboxylation of four acetate groups of uroporphyrinogen-III to yield coproporphyrinogen-III. This Acinetobacter baumannii (strain ATCC 17978 / DSM 105126 / CIP 53.77 / LMG 1025 / NCDC KC755 / 5377) protein is Uroporphyrinogen decarboxylase.